Consider the following 171-residue polypeptide: Secretion monitor (171 aa).

A signal peptide spans 1–36 (MIGILNRWRQFGRRYFWPHLLLGMVAASLGLPTSLN).

It belongs to the SecM family.

It localises to the cytoplasm. Its subcellular location is the cytosol. The protein localises to the periplasm. Regulates secA expression by translational coupling of the secM secA operon. Translational pausing at a specific Pro residue 5 residues before the end of the protein may allow disruption of a mRNA repressor helix that normally suppresses secA translation initiation. The polypeptide is Secretion monitor (Pectobacterium carotovorum subsp. carotovorum (strain PC1)).